Reading from the N-terminus, the 107-residue chain is Pyrimidine/purine nucleoside phosphorylase (107 aa).

Belongs to the nucleoside phosphorylase PpnP family.

It catalyses the reaction a purine D-ribonucleoside + phosphate = a purine nucleobase + alpha-D-ribose 1-phosphate. The catalysed reaction is adenosine + phosphate = alpha-D-ribose 1-phosphate + adenine. It carries out the reaction cytidine + phosphate = cytosine + alpha-D-ribose 1-phosphate. The enzyme catalyses guanosine + phosphate = alpha-D-ribose 1-phosphate + guanine. It catalyses the reaction inosine + phosphate = alpha-D-ribose 1-phosphate + hypoxanthine. The catalysed reaction is thymidine + phosphate = 2-deoxy-alpha-D-ribose 1-phosphate + thymine. It carries out the reaction uridine + phosphate = alpha-D-ribose 1-phosphate + uracil. The enzyme catalyses xanthosine + phosphate = alpha-D-ribose 1-phosphate + xanthine. Functionally, catalyzes the phosphorolysis of diverse nucleosides, yielding D-ribose 1-phosphate and the respective free bases. Can use uridine, adenosine, guanosine, cytidine, thymidine, inosine and xanthosine as substrates. Also catalyzes the reverse reactions. The chain is Pyrimidine/purine nucleoside phosphorylase from Aromatoleum aromaticum (strain DSM 19018 / LMG 30748 / EbN1) (Azoarcus sp. (strain EbN1)).